Consider the following 314-residue polypeptide: 4-diphosphocytidyl-2-C-methyl-D-erythritol kinase (314 aa).

Lysine 11 is an active-site residue. 95–105 serves as a coordination point for ATP; the sequence is PIGAGLAGGST. Residue aspartate 137 is part of the active site.

Belongs to the GHMP kinase family. IspE subfamily.

It carries out the reaction 4-CDP-2-C-methyl-D-erythritol + ATP = 4-CDP-2-C-methyl-D-erythritol 2-phosphate + ADP + H(+). Its pathway is isoprenoid biosynthesis; isopentenyl diphosphate biosynthesis via DXP pathway; isopentenyl diphosphate from 1-deoxy-D-xylulose 5-phosphate: step 3/6. Functionally, catalyzes the phosphorylation of the position 2 hydroxy group of 4-diphosphocytidyl-2C-methyl-D-erythritol. The protein is 4-diphosphocytidyl-2-C-methyl-D-erythritol kinase of Synechococcus elongatus (strain ATCC 33912 / PCC 7942 / FACHB-805) (Anacystis nidulans R2).